The primary structure comprises 635 residues: Threonine--tRNA ligase (635 aa).

The TGS domain maps to 1–62 (MITITLPDGS…EHDAILRIIT (62 aa)). The interval 244–535 (DHRKIGKAQD…LIEHYAGIWP (292 aa)) is catalytic. Cys335, His386, and His512 together coordinate Zn(2+).

The protein belongs to the class-II aminoacyl-tRNA synthetase family. Homodimer. Zn(2+) serves as cofactor.

It is found in the cytoplasm. It carries out the reaction tRNA(Thr) + L-threonine + ATP = L-threonyl-tRNA(Thr) + AMP + diphosphate + H(+). Functionally, catalyzes the attachment of threonine to tRNA(Thr) in a two-step reaction: L-threonine is first activated by ATP to form Thr-AMP and then transferred to the acceptor end of tRNA(Thr). Also edits incorrectly charged L-seryl-tRNA(Thr). The chain is Threonine--tRNA ligase from Xylella fastidiosa (strain M23).